A 227-amino-acid polypeptide reads, in one-letter code: MSKTSRSRINRRSIDNNICINSSCNKKKFPDNVVYRNKEKKIIHEECKICFNKRAKLYRERNKAKLKEKQHKWYHKGGGKEHKKLYDKINLEKSNMRDKNRYATDLNFRMKKILRSRLYKVTKKGQYSKKMTEYLGIDINIFRQWIEFQFDENMSWENQGSYWHIDHVIPCKSFDLTEEEEISQCFNWENMRPLEGIENDIKNDKILPDEIKKHKKLVLKFKKKINL.

Positions Asn-52 to Asn-100 form a coiled coil.

This sequence belongs to the mimivirus L246/L426 family.

This is an uncharacterized protein from Acanthamoeba polyphaga mimivirus (APMV).